The following is an 847-amino-acid chain: Protein HIR2 (847 aa).

WD repeat units lie at residues 10–46 (LHDG…NAAT), 113–153 (KDNE…LKSS), 155–194 (ELKS…TTKL), 259–305 (KFSP…PLFD), and 309–348 (VVNS…LGDV). Positions 368-399 (PFKPKAEEPDTKLPPNKTAQQTTTNSKKQPKA) are disordered. The span at 384–394 (KTAQQTTTNSK) shows a compositional bias: polar residues. 2 WD repeats span residues 508 to 548 (RKDN…IYVT) and 558 to 597 (PMLL…IAFP).

Belongs to the WD repeat HIR1 family.

It is found in the nucleus. Functionally, required for replication-independent chromatin assembly and for the periodic repression of histone gene transcription during the cell cycle. The chain is Protein HIR2 (HIR2) from Kluyveromyces lactis (strain ATCC 8585 / CBS 2359 / DSM 70799 / NBRC 1267 / NRRL Y-1140 / WM37) (Yeast).